We begin with the raw amino-acid sequence, 103 residues long: uncharacterized protein (103 aa).

Composition is skewed to polar residues over residues 1–10 and 18–28; these read MSNSCSTSSY and TRSGSNVNRNY. Residues 1–28 are disordered; it reads MSNSCSTSSYPIRRKTPTRSGSNVNRNY.

This is an uncharacterized protein from Acanthamoeba polyphaga mimivirus (APMV).